The chain runs to 117 residues: Large ribosomal subunit protein uL18 (117 aa).

It belongs to the universal ribosomal protein uL18 family. Part of the 50S ribosomal subunit; part of the 5S rRNA/L5/L18/L25 subcomplex. Contacts the 5S and 23S rRNAs.

Its function is as follows. This is one of the proteins that bind and probably mediate the attachment of the 5S RNA into the large ribosomal subunit, where it forms part of the central protuberance. The polypeptide is Large ribosomal subunit protein uL18 (Buchnera aphidicola subsp. Acyrthosiphon kondoi (Acyrthosiphon kondoi symbiotic bacterium)).